Reading from the N-terminus, the 130-residue chain is DNA-directed RNA polymerase subunit omega (130 aa).

The disordered stretch occupies residues 109 to 130; sequence EEELLKGLEGLAPPEEQPEEDE.

This sequence belongs to the RNA polymerase subunit omega family. The RNAP catalytic core consists of 2 alpha, 1 beta, 1 beta' and 1 omega subunit. When a sigma factor is associated with the core the holoenzyme is formed, which can initiate transcription.

The enzyme catalyses RNA(n) + a ribonucleoside 5'-triphosphate = RNA(n+1) + diphosphate. Promotes RNA polymerase assembly. Latches the N- and C-terminal regions of the beta' subunit thereby facilitating its interaction with the beta and alpha subunits. The protein is DNA-directed RNA polymerase subunit omega of Rhodopseudomonas palustris (strain BisB5).